A 317-amino-acid polypeptide reads, in one-letter code: Ribosomal protein L11 methyltransferase (317 aa).

Residues threonine 158, glycine 179, aspartate 201, and asparagine 244 each contribute to the S-adenosyl-L-methionine site.

It belongs to the methyltransferase superfamily. PrmA family.

It localises to the cytoplasm. The catalysed reaction is L-lysyl-[protein] + 3 S-adenosyl-L-methionine = N(6),N(6),N(6)-trimethyl-L-lysyl-[protein] + 3 S-adenosyl-L-homocysteine + 3 H(+). Its function is as follows. Methylates ribosomal protein L11. The protein is Ribosomal protein L11 methyltransferase of Streptococcus pyogenes serotype M5 (strain Manfredo).